We begin with the raw amino-acid sequence, 876 residues long: Protein argonaute 17 (876 aa).

Residues 246-338 enclose the PAZ domain; that stretch reads PVVDYVAQLL…LPLEVCKIAE (93 aa). Residues 514 to 834 form the Piwi domain; sequence LLIVILPNNN…LSSRARCYIK (321 aa). The tract at residues 839–859 is disordered; it reads GDSTSHTSLPSEEDSSAASET.

It belongs to the argonaute family. Ago subfamily.

Its function is as follows. Probably involved in the RNA silencing pathway. May bind to short RNAs such as microRNAs (miRNAs) or short interfering RNAs (siRNAs), and represses the translation of mRNAs which are complementary to them. This is Protein argonaute 17 (AGO17) from Oryza sativa subsp. japonica (Rice).